A 621-amino-acid polypeptide reads, in one-letter code: Laccase-2 (621 aa).

The signal sequence occupies residues 1 to 23 (MMKSFFSAAALLLGLVAPSAVLA). A propeptide spanning residues 24-48 (APSLPGVPREVTRDLLRPVEERQSS) is cleaved from the precursor. Cysteine 49 and cysteine 57 form a disulfide bridge. Plastocyanin-like domains are found at residues 78–201 (TRTY…IVVN) and 210–367 (IDLG…LPTN). An N-linked (GlcNAc...) asparagine glycan is attached at asparagine 133. Cu cation is bound by residues histidine 138, histidine 140, histidine 183, and histidine 185. 2 disulfide bridges follow: cysteine 159–cysteine 586 and cysteine 343–cysteine 377. 5 N-linked (GlcNAc...) asparagine glycosylation sites follow: asparagine 261, asparagine 276, asparagine 289, asparagine 325, and asparagine 334. N-linked (GlcNAc...) asparagine glycans are attached at residues asparagine 401, asparagine 421, and asparagine 441. One can recognise a Plastocyanin-like 3 domain in the interval 430–566 (DKPIVDYVIA…GGLSVQYLER (137 aa)). Histidine 476, histidine 479, histidine 481, histidine 548, cysteine 549, histidine 550, and histidine 554 together coordinate Cu cation. Residues 606-621 (KVKKWVGEHPDWYIKN) constitute a propeptide that is removed on maturation.

Belongs to the multicopper oxidase family. In terms of assembly, monomer. It depends on Cu cation as a cofactor. In terms of processing, proteolytically processed at both its N-terminus and its C-terminus.

Its subcellular location is the secreted. The catalysed reaction is 4 hydroquinone + O2 = 4 benzosemiquinone + 2 H2O. In terms of biological role, probably involved in lignin degradation and in the detoxification of lignin-derived products in its natural habitat (herbivorous dung), which is rich in lignin of grasses and straw. Probably involved in melanin synthesis and in perithecia development. The protein is Laccase-2 (LAC2) of Podospora anserina (Pleurage anserina).